An 858-amino-acid polypeptide reads, in one-letter code: Receptor-like protein kinase ANXUR2 (858 aa).

The signal sequence occupies residues 1–27 (MNEKLRILFSFLCFFYVLLVSPSQSNG). Topologically, residues 28–431 (QDISLSCGAS…VKKDFQGDKR (404 aa)) are extracellular. N-linked (GlcNAc...) asparagine glycosylation is found at asparagine 133, asparagine 293, asparagine 303, and asparagine 331. Residues 432–452 (ITAFVIGSAGGVAAVLFCALC) traverse the membrane as a helical segment. Residues 453-858 (FTMYQRKRKF…FSQIVNPKGR (406 aa)) lie on the Cytoplasmic side of the membrane. The 274-residue stretch at 521-794 (FDESNVIGVG…GDVLWNLEFA (274 aa)) folds into the Protein kinase domain. ATP is bound by residues 527 to 535 (IGVGGFGKV) and lysine 549. Aspartate 645 (proton acceptor) is an active-site residue. Residues 800-858 (TADGSRHRTPSNGGGSVDLGGGGGGVTVNISAGESDLGDDLSSEENSGIFSQIVNPKGR) are disordered. Residues 811–825 (NGGGSVDLGGGGGGV) are compositionally biased toward gly residues. The segment covering 843 to 858 (EENSGIFSQIVNPKGR) has biased composition (polar residues).

This sequence belongs to the protein kinase superfamily. Ser/Thr protein kinase family. Expressed in pollen, but not in pistils or seedlings.

The protein localises to the cell membrane. It catalyses the reaction L-seryl-[protein] + ATP = O-phospho-L-seryl-[protein] + ADP + H(+). It carries out the reaction L-threonyl-[protein] + ATP = O-phospho-L-threonyl-[protein] + ADP + H(+). Receptor-like protein kinase that controls pollen tube behavior by directing rupture at proper timing to release the sperm cell. The chain is Receptor-like protein kinase ANXUR2 (ANX2) from Arabidopsis thaliana (Mouse-ear cress).